The primary structure comprises 652 residues: Acetyl-coenzyme A synthetase (652 aa).

Residues 191 to 194 (RAGN) and T311 each bind CoA. ATP contacts are provided by residues 387 to 389 (GEP), 411 to 416 (DTWWQT), D503, and R518. A CoA-binding site is contributed by S526. R529 serves as a coordination point for ATP. V540, H542, and V545 together coordinate Mg(2+). R587 contributes to the CoA binding site. K613 bears the N6-acetyllysine mark.

The protein belongs to the ATP-dependent AMP-binding enzyme family. Requires Mg(2+) as cofactor. In terms of processing, acetylated. Deacetylation by the SIR2-homolog deacetylase activates the enzyme.

The enzyme catalyses acetate + ATP + CoA = acetyl-CoA + AMP + diphosphate. In terms of biological role, catalyzes the conversion of acetate into acetyl-CoA (AcCoA), an essential intermediate at the junction of anabolic and catabolic pathways. AcsA undergoes a two-step reaction. In the first half reaction, AcsA combines acetate with ATP to form acetyl-adenylate (AcAMP) intermediate. In the second half reaction, it can then transfer the acetyl group from AcAMP to the sulfhydryl group of CoA, forming the product AcCoA. This chain is Acetyl-coenzyme A synthetase, found in Marinomonas sp. (strain MWYL1).